Reading from the N-terminus, the 601-residue chain is CDPK-related kinase 5 (601 aa).

The segment covering Met-1–Arg-19 has biased composition (polar residues). 2 disordered regions span residues Met-1 to Phe-55 and Lys-70 to Ser-98. Residue Gly-2 is the site of N-myristoyl glycine attachment. Residues Ser-26–Ser-35 show a composition bias toward low complexity. The segment covering Val-36–Asn-48 has biased composition (polar residues). One can recognise a Protein kinase domain in the interval Tyr-148–Ile-410. Residues Val-154–Thr-162 and Lys-180 each bind ATP. Asp-276 acts as the Proton acceptor in catalysis. Ser-316 is subject to Phosphoserine. The interval Asp-415–Leu-445 is autoinhibitory domain. Residues Ser-434–Leu-454 form a calmodulin binding (CaMBD) region. EF-hand domains are found at residues Asp-452–Ala-488, Met-489–Leu-524, Glu-525–Val-564, and His-567–Arg-596. Ca(2+)-binding residues include Ser-467, Asn-469, Thr-471, Asn-476, Arg-508, Glu-513, Asn-546, Glu-553, Asp-578, and Lys-580. A Phosphoserine modification is found at Ser-582.

The protein belongs to the protein kinase superfamily. Ser/Thr protein kinase family. CDPK subfamily. Binds calmodulin (CaM) in a calcium-dependent manner.

Its subcellular location is the membrane. The catalysed reaction is L-seryl-[protein] + ATP = O-phospho-L-seryl-[protein] + ADP + H(+). It carries out the reaction L-threonyl-[protein] + ATP = O-phospho-L-threonyl-[protein] + ADP + H(+). Activated by calcium and calmodulin. Autophosphorylation may play an important role in the regulation of the kinase activity. Functionally, may play a role in signal transduction pathways that involve calcium as a second messenger. In Arabidopsis thaliana (Mouse-ear cress), this protein is CDPK-related kinase 5 (CRK5).